The primary structure comprises 558 residues: Xylulose kinase 2 (558 aa).

Substrate-binding positions include Asp16, 20 to 23, Ser111, and Asp283; that span reads QSMK. ATP is bound by residues Thr305 and 456–460; that span reads GASAN.

It belongs to the FGGY kinase family. Requires a divalent metal cation as cofactor.

It is found in the cytoplasm. It catalyses the reaction D-xylulose + ATP = D-xylulose 5-phosphate + ADP + H(+). It functions in the pathway isoprenoid biosynthesis; carotenoid biosynthesis. Repressed by oxo-clomazone (keto-clomazone), a bleaching herbicide. In terms of biological role, mediates 1-deoxy-D-xylulose (DX) phosphorylation in the cytoplasm prior to the translocation of 1-deoxy-D-xylulose 5-phosphate into plastids. Can also phosphorylate D-xylulose (Xyl). Uses preferentially ATP as cosubstrate. The polypeptide is Xylulose kinase 2 (Arabidopsis thaliana (Mouse-ear cress)).